Here is a 509-residue protein sequence, read N- to C-terminus: UDP-N-acetylmuramyl-tripeptide synthetase (509 aa).

124–130 (GTNGKTS) is a binding site for ATP. UDP-N-acetyl-alpha-D-muramoyl-L-alanyl-D-glutamate is bound by residues 164–165 (TT), Ser-191, and Arg-199. Lys-231 is modified (N6-carboxylysine).

It belongs to the MurCDEF family. MurE subfamily. Carboxylation is probably crucial for Mg(2+) binding and, consequently, for the gamma-phosphate positioning of ATP.

The protein localises to the cytoplasm. Its pathway is cell wall biogenesis; peptidoglycan biosynthesis. Functionally, catalyzes the addition of an amino acid to the nucleotide precursor UDP-N-acetylmuramoyl-L-alanyl-D-glutamate (UMAG) in the biosynthesis of bacterial cell-wall peptidoglycan. In Tropheryma whipplei (strain TW08/27) (Whipple's bacillus), this protein is UDP-N-acetylmuramyl-tripeptide synthetase.